Reading from the N-terminus, the 167-residue chain is Small ribosomal subunit protein uS5 (167 aa).

An S5 DRBM domain is found at 12-75 (LEERVVTINR…EDAKKNMVFV (64 aa)).

It belongs to the universal ribosomal protein uS5 family. Part of the 30S ribosomal subunit. Contacts proteins S4 and S8.

Functionally, with S4 and S12 plays an important role in translational accuracy. Located at the back of the 30S subunit body where it stabilizes the conformation of the head with respect to the body. The sequence is that of Small ribosomal subunit protein uS5 from Listeria innocua serovar 6a (strain ATCC BAA-680 / CLIP 11262).